Reading from the N-terminus, the 147-residue chain is Auxin-responsive protein SAUR41 (147 aa).

The protein belongs to the ARG7 family. Specifically expressed in the quiescent center and cortex or endodermis initials of root stem niches. Expressed in vascular tissues from hypocotyls, petioles and cotyledons.

The protein resides in the cytoplasm. Its function is as follows. Plays a role in the regulation of cell expansion, root meristem patterning and auxin transport. The chain is Auxin-responsive protein SAUR41 from Arabidopsis thaliana (Mouse-ear cress).